The primary structure comprises 267 residues: GTP cyclohydrolase FolE2 (267 aa).

This sequence belongs to the GTP cyclohydrolase IV family.

It carries out the reaction GTP + H2O = 7,8-dihydroneopterin 3'-triphosphate + formate + H(+). The protein operates within cofactor biosynthesis; 7,8-dihydroneopterin triphosphate biosynthesis; 7,8-dihydroneopterin triphosphate from GTP: step 1/1. Functionally, converts GTP to 7,8-dihydroneopterin triphosphate. This Geobacter sp. (strain M21) protein is GTP cyclohydrolase FolE2.